We begin with the raw amino-acid sequence, 557 residues long: Probable protein kinase UbiB (557 aa).

In terms of domain architecture, Protein kinase spans alanine 121–alanine 509. ATP-binding positions include leucine 127–valine 135 and lysine 154. Aspartate 289 acts as the Proton acceptor in catalysis. A run of 2 helical transmembrane segments spans residues valine 506–histidine 526 and valine 535–leucine 555.

It belongs to the ABC1 family. UbiB subfamily.

The protein localises to the cell inner membrane. Its pathway is cofactor biosynthesis; ubiquinone biosynthesis [regulation]. Functionally, is probably a protein kinase regulator of UbiI activity which is involved in aerobic coenzyme Q (ubiquinone) biosynthesis. The sequence is that of Probable protein kinase UbiB from Xanthomonas campestris pv. campestris (strain 8004).